Reading from the N-terminus, the 237-residue chain is Ribosomal RNA small subunit methyltransferase G (237 aa).

S-adenosyl-L-methionine-binding positions include G78, F83, 129-130 (AE), and R148. Residues 218–237 (KKETPRKYPRKAGTPNKKPL) form a disordered region.

It belongs to the methyltransferase superfamily. RNA methyltransferase RsmG family.

It localises to the cytoplasm. In terms of biological role, specifically methylates the N7 position of a guanine in 16S rRNA. In Streptococcus uberis (strain ATCC BAA-854 / 0140J), this protein is Ribosomal RNA small subunit methyltransferase G.